The chain runs to 1435 residues: Protein SPP41 (1435 aa).

Disordered stretches follow at residues 16–74 (VGNL…NIEI), 88–265 (VANA…ENTL), 286–309 (AKQT…VEAQ), 322–424 (ELLS…DDEF), 442–482 (ETST…DSLD), 519–708 (SVSD…MKVP), and 934–972 (QQLD…AGHT). The segment covering 27–42 (GQEEGEVQGGEQEGDD) has biased composition (acidic residues). Basic and acidic residues-rich tracts occupy residues 53 to 63 (IEPKHPDDSQH), 98 to 127 (EQAK…KEQQ), and 139 to 154 (LKSD…ERRV). In terms of domain architecture, UIM spans 171-190 (QDDENLRMAILESLQELNTN). The span at 196–205 (EPEKHEHAAP) shows a compositional bias: basic and acidic residues. The span at 211-223 (SKKSSKKKKKDKS) shows a compositional bias: basic residues. Basic and acidic residues predominate over residues 224–234 (KNRESSKDKSS). Residues 235–249 (KKSKSSSHSKKHAKD) are compositionally biased toward basic residues. Residues 286–301 (AKQTVDIQDNSHTDNT) show a composition bias toward polar residues. Residues 345 to 355 (KAVEPPRKPTA) are compositionally biased toward basic and acidic residues. Positions 367–383 (KPKKRPPQEKKKTKSKT) are enriched in basic residues. A compositionally biased stretch (low complexity) spans 384-398 (SKAASTANKSPASES). Composition is skewed to polar residues over residues 442–451 (ETSTHTATQD) and 459–482 (DFTS…DSLD). 3 stretches are compositionally biased toward basic and acidic residues: residues 524-548 (LPHD…EKKT), 610-628 (KNKE…AREE), and 637-652 (KQRL…KIVE). The segment covering 665–674 (KSGKPKKPYR) has biased composition (basic residues). The segment covering 676–691 (WTPEELLKRSQEAEKP) has biased composition (basic and acidic residues). The short motif at 683–699 (KRSQEAEKPRKVKKERK) is the Nuclear localization signal element. A compositionally biased stretch (basic residues) spans 692-706 (RKVKKERKKKEKKMK). Residue lysine 981 forms a Glycyl lysine isopeptide (Lys-Gly) (interchain with G-Cter in SUMO) linkage. Positions 1005 to 1014 (KLELTKRAES) are enriched in basic and acidic residues. Residues 1005 to 1125 (KLELTKRAES…DSVNTTTGKP (121 aa)) are disordered. At serine 1014 the chain carries Phosphoserine. The span at 1021–1032 (NVETAKETQSVQ) shows a compositional bias: polar residues. Composition is skewed to basic and acidic residues over residues 1033-1082 (EIKE…EKIA) and 1091-1103 (LSDK…KSTL). Serine 1067 is modified (phosphoserine). Over residues 1108–1123 (AQLTGNEPDSVNTTTG) the composition is skewed to polar residues. Lysine 1154 participates in a covalent cross-link: Glycyl lysine isopeptide (Lys-Gly) (interchain with G-Cter in SUMO).

Interacts with PRP8 and RAP1.

The protein localises to the nucleus. Its function is as follows. Negative regulator of PRP3 and PRP4 genes. This is Protein SPP41 (SPP41) from Saccharomyces cerevisiae (strain ATCC 204508 / S288c) (Baker's yeast).